The following is a 121-amino-acid chain: Large ribosomal subunit protein uL22c (121 aa).

Belongs to the universal ribosomal protein uL22 family. Part of the 50S ribosomal subunit.

The protein resides in the plastid. Its subcellular location is the chloroplast. This protein binds specifically to 23S rRNA. Functionally, the globular domain of the protein is located near the polypeptide exit tunnel on the outside of the subunit, while an extended beta-hairpin is found that lines the wall of the exit tunnel in the center of the 70S ribosome. This chain is Large ribosomal subunit protein uL22c (rpl22), found in Guillardia theta (Cryptophyte).